Here is a 448-residue protein sequence, read N- to C-terminus: GTPase Der (448 aa).

2 EngA-type G domains span residues phenylalanine 2 to glutamine 171 and proline 181 to serine 364. Residues glycine 8–serine 15, aspartate 58–phenylalanine 62, asparagine 123–aspartate 126, glycine 187–serine 194, aspartate 234–isoleucine 238, and asparagine 305–aspartate 308 contribute to the GTP site. The KH-like domain maps to lysine 365–lysine 448.

It belongs to the TRAFAC class TrmE-Era-EngA-EngB-Septin-like GTPase superfamily. EngA (Der) GTPase family. In terms of assembly, associates with the 50S ribosomal subunit.

Its function is as follows. GTPase that plays an essential role in the late steps of ribosome biogenesis. The chain is GTPase Der from Thermodesulfovibrio yellowstonii (strain ATCC 51303 / DSM 11347 / YP87).